The primary structure comprises 365 residues: 2-aminoethylphosphonate--pyruvate transaminase (365 aa).

K194 carries the N6-(pyridoxal phosphate)lysine modification.

The protein belongs to the class-V pyridoxal-phosphate-dependent aminotransferase family. PhnW subfamily. Homodimer. Pyridoxal 5'-phosphate is required as a cofactor.

It catalyses the reaction (2-aminoethyl)phosphonate + pyruvate = phosphonoacetaldehyde + L-alanine. In terms of biological role, involved in phosphonate degradation. This Bacillus mycoides (strain KBAB4) (Bacillus weihenstephanensis) protein is 2-aminoethylphosphonate--pyruvate transaminase.